The sequence spans 228 residues: MSDPAPEVASAVPVASPAKAKKEKKPKTDKPKKAKAPRTHPPVSEMVVNAIKTLKERGGSSLQAIKKFLAAQYKVDVDKLAPFIKKYLRGAVTKGELLQTKGKGASGSFKLPAAAKKEKVAKTPKKAAGEKKPQAAAKPKKALEKKKSIAKKPKAATATKVKKPVAKSTKKPAAVKPAAKKAAPKPKAAPKPKAATKPKKEVKPKKVAAKKPAEKKPEAAKKPAAKKA.

Over residues 1–18 the composition is skewed to low complexity; the sequence is MSDPAPEVASAVPVASPA. Disordered regions lie at residues 1–44 and 98–228; these read MSDP…PPVS and LQTK…AKKA. In terms of domain architecture, H15 spans 39–113; the sequence is THPPVSEMVV…GASGSFKLPA (75 aa). Basic and acidic residues predominate over residues 115 to 133; the sequence is AKKEKVAKTPKKAAGEKKP. 2 stretches are compositionally biased toward basic residues: residues 148–170 and 178–209; these read SIAK…KSTK and AAKK…KVAA. The span at 211-221 shows a compositional bias: basic and acidic residues; sequence KPAEKKPEAAK.

It belongs to the histone H1/H5 family.

The protein resides in the nucleus. It is found in the chromosome. In terms of biological role, histones H1 are necessary for the condensation of nucleosome chains into higher-order structures. This chain is Histone H1-III, found in Glyptotendipes barbipes (Midge).